A 325-amino-acid chain; its full sequence is Probable tRNA pseudouridine synthase B (325 aa).

The Nucleophile role is filled by Asp-69. Residues 236-311 (LPKIVIKDSA…IAADIQRVMM (76 aa)) enclose the PUA domain.

The protein belongs to the pseudouridine synthase TruB family. Type 2 subfamily.

The enzyme catalyses uridine(55) in tRNA = pseudouridine(55) in tRNA. Its function is as follows. Could be responsible for synthesis of pseudouridine from uracil-55 in the psi GC loop of transfer RNAs. The polypeptide is Probable tRNA pseudouridine synthase B (Archaeoglobus fulgidus (strain ATCC 49558 / DSM 4304 / JCM 9628 / NBRC 100126 / VC-16)).